A 484-amino-acid chain; its full sequence is uncharacterized protein (484 aa).

One can recognise an FAD-binding PCMH-type domain in the interval 47-226 (TLPIPAAVVK…TEVTVKIFKF (180 aa)).

Belongs to the FAD-binding oxidoreductase/transferase type 4 family.

This is an uncharacterized protein from Escherichia coli (strain K12).